Reading from the N-terminus, the 187-residue chain is Peptide deformylase (187 aa).

The Fe cation site is built by C96 and H138. E139 is a catalytic residue. A Fe cation-binding site is contributed by H142.

Belongs to the polypeptide deformylase family. It depends on Fe(2+) as a cofactor.

The catalysed reaction is N-terminal N-formyl-L-methionyl-[peptide] + H2O = N-terminal L-methionyl-[peptide] + formate. Its function is as follows. Removes the formyl group from the N-terminal Met of newly synthesized proteins. Requires at least a dipeptide for an efficient rate of reaction. N-terminal L-methionine is a prerequisite for activity but the enzyme has broad specificity at other positions. This chain is Peptide deformylase, found in Brachyspira hyodysenteriae (strain ATCC 49526 / WA1).